Consider the following 261-residue polypeptide: 5'-nucleotidase SurE (261 aa).

Residues D8, D9, S40, and N94 each contribute to the a divalent metal cation site.

It belongs to the SurE nucleotidase family. A divalent metal cation is required as a cofactor.

The protein localises to the cytoplasm. It catalyses the reaction a ribonucleoside 5'-phosphate + H2O = a ribonucleoside + phosphate. Its function is as follows. Nucleotidase that shows phosphatase activity on nucleoside 5'-monophosphates. In Anaplasma marginale (strain Florida), this protein is 5'-nucleotidase SurE.